The primary structure comprises 98 residues: NADH-ubiquinone oxidoreductase chain 4L (98 aa).

A run of 3 helical transmembrane segments spans residues 1-21, 29-49, and 61-81; these read MTMV…GLLM, SLLC…VTIL, and IILL…LVMV.

Belongs to the complex I subunit 4L family. Core subunit of respiratory chain NADH dehydrogenase (Complex I) which is composed of 45 different subunits.

It localises to the mitochondrion inner membrane. It catalyses the reaction a ubiquinone + NADH + 5 H(+)(in) = a ubiquinol + NAD(+) + 4 H(+)(out). In terms of biological role, core subunit of the mitochondrial membrane respiratory chain NADH dehydrogenase (Complex I) which catalyzes electron transfer from NADH through the respiratory chain, using ubiquinone as an electron acceptor. Part of the enzyme membrane arm which is embedded in the lipid bilayer and involved in proton translocation. This chain is NADH-ubiquinone oxidoreductase chain 4L (MT-ND4L), found in Mirounga angustirostris (Northern elephant seal).